A 672-amino-acid chain; its full sequence is Rho GTPase-activating protein 40 (672 aa).

The tract at residues 43–68 is disordered; it reads GCSPGLSTGPTNLQQHPQKPRPADCS. A compositionally biased stretch (polar residues) spans 47–59; the sequence is GLSTGPTNLQQHP. The Rho-GAP domain maps to 321–519; the sequence is VPLHSLLEAD…MMVQYQDLLW (199 aa).

In terms of biological role, GTPase activator for the Rho-type GTPases by converting them to an inactive GDP-bound state. The chain is Rho GTPase-activating protein 40 from Mus musculus (Mouse).